We begin with the raw amino-acid sequence, 379 residues long: Phospho-N-acetylmuramoyl-pentapeptide-transferase (379 aa).

Transmembrane regions (helical) follow at residues 27 to 47 (FRTA…GPAV), 76 to 96 (TMGG…WADL), 100 to 120 (FVWI…TDDY), 135 to 155 (AKMG…VLVQ), 185 to 205 (PHIW…VLVG), 218 to 238 (GLAI…TYVS), 255 to 275 (VGEL…FLWY), 283 to 303 (FMGD…AVII), 307 to 327 (LLLP…ILQV), and 356 to 376 (KIIV…LTTL).

This sequence belongs to the glycosyltransferase 4 family. MraY subfamily. It depends on Mg(2+) as a cofactor.

It localises to the cell inner membrane. The enzyme catalyses UDP-N-acetyl-alpha-D-muramoyl-L-alanyl-gamma-D-glutamyl-meso-2,6-diaminopimeloyl-D-alanyl-D-alanine + di-trans,octa-cis-undecaprenyl phosphate = di-trans,octa-cis-undecaprenyl diphospho-N-acetyl-alpha-D-muramoyl-L-alanyl-D-glutamyl-meso-2,6-diaminopimeloyl-D-alanyl-D-alanine + UMP. It functions in the pathway cell wall biogenesis; peptidoglycan biosynthesis. In terms of biological role, catalyzes the initial step of the lipid cycle reactions in the biosynthesis of the cell wall peptidoglycan: transfers peptidoglycan precursor phospho-MurNAc-pentapeptide from UDP-MurNAc-pentapeptide onto the lipid carrier undecaprenyl phosphate, yielding undecaprenyl-pyrophosphoryl-MurNAc-pentapeptide, known as lipid I. In Koribacter versatilis (strain Ellin345), this protein is Phospho-N-acetylmuramoyl-pentapeptide-transferase.